Consider the following 142-residue polypeptide: HTH-type transcriptional regulator MntR (142 aa).

One can recognise an HTH dtxR-type domain in the interval 1–63; the sequence is MPTPSMEDYI…YEKYRGLILT (63 aa). Mn(2+)-binding residues include Asp8, Glu11, His77, Glu99, Glu102, and His103.

The protein belongs to the DtxR/MntR family. In terms of assembly, homodimer.

It localises to the cytoplasm. Its activity is regulated as follows. DNA binding is strongly activated by Mn(2+). Its function is as follows. Central regulator of manganese homeostasis. This Listeria innocua serovar 6a (strain ATCC BAA-680 / CLIP 11262) protein is HTH-type transcriptional regulator MntR.